The following is a 265-amino-acid chain: Small ribosomal subunit protein uS2 (265 aa).

The disordered stretch occupies residues 226–265; sequence AAAPNSASVREEEFSAESADEGKGRRAPAKKGDKKADAAE. The segment covering 245 to 265 has biased composition (basic and acidic residues); the sequence is DEGKGRRAPAKKGDKKADAAE.

This sequence belongs to the universal ribosomal protein uS2 family.

This Xanthomonas euvesicatoria pv. vesicatoria (strain 85-10) (Xanthomonas campestris pv. vesicatoria) protein is Small ribosomal subunit protein uS2.